We begin with the raw amino-acid sequence, 410 residues long: Peptidase T (410 aa).

His78 contacts Zn(2+). Asp80 is a catalytic residue. A Zn(2+)-binding site is contributed by Asp139. The active-site Proton acceptor is the Glu173. Glu174, Asp196, and His378 together coordinate Zn(2+).

This sequence belongs to the peptidase M20B family. Zn(2+) serves as cofactor.

It localises to the cytoplasm. The catalysed reaction is Release of the N-terminal residue from a tripeptide.. Its function is as follows. Cleaves the N-terminal amino acid of tripeptides. The protein is Peptidase T of Shewanella woodyi (strain ATCC 51908 / MS32).